Consider the following 226-residue polypeptide: ATP synthase F(0) complex subunit a (226 aa).

The next 6 membrane-spanning stretches (helical) occupy residues 5–25, 68–88, 97–117, 136–156, 179–199, and 201–221; these read LFAP…LIII, WSLM…LGML, QLSM…ATGF, FLIP…PVAL, LVLM…LALL, and ILEF…VSLY.

This sequence belongs to the ATPase A chain family. In terms of assembly, component of the ATP synthase complex composed at least of ATP5F1A/subunit alpha, ATP5F1B/subunit beta, ATP5MC1/subunit c (homooctomer), MT-ATP6/subunit a, MT-ATP8/subunit 8, ATP5ME/subunit e, ATP5MF/subunit f, ATP5MG/subunit g, ATP5MK/subunit k, ATP5MJ/subunit j, ATP5F1C/subunit gamma, ATP5F1D/subunit delta, ATP5F1E/subunit epsilon, ATP5PF/subunit F6, ATP5PB/subunit b, ATP5PD/subunit d, ATP5PO/subunit OSCP. ATP synthase complex consists of a soluble F(1) head domain (subunits alpha(3) and beta(3)) - the catalytic core - and a membrane F(0) domain - the membrane proton channel (subunits c, a, 8, e, f, g, k and j). These two domains are linked by a central stalk (subunits gamma, delta, and epsilon) rotating inside the F1 region and a stationary peripheral stalk (subunits F6, b, d, and OSCP). Interacts with DNAJC30; interaction is direct.

The protein resides in the mitochondrion inner membrane. It catalyses the reaction H(+)(in) = H(+)(out). In terms of biological role, subunit a, of the mitochondrial membrane ATP synthase complex (F(1)F(0) ATP synthase or Complex V) that produces ATP from ADP in the presence of a proton gradient across the membrane which is generated by electron transport complexes of the respiratory chain. ATP synthase complex consist of a soluble F(1) head domain - the catalytic core - and a membrane F(1) domain - the membrane proton channel. These two domains are linked by a central stalk rotating inside the F(1) region and a stationary peripheral stalk. During catalysis, ATP synthesis in the catalytic domain of F(1) is coupled via a rotary mechanism of the central stalk subunits to proton translocation. With the subunit c (ATP5MC1), forms the proton-conducting channel in the F(0) domain, that contains two crucial half-channels (inlet and outlet) that facilitate proton movement from the mitochondrial intermembrane space (IMS) into the matrix. Protons are taken up via the inlet half-channel and released through the outlet half-channel, following a Grotthuss mechanism. The chain is ATP synthase F(0) complex subunit a from Balaenoptera musculus (Blue whale).